The sequence spans 285 residues: Heterogeneous nuclear ribonucleoprotein A/B (285 aa).

The interval 1-65 (MSDAAEEQPM…NQNGAEGDQI (65 aa)) is disordered. The span at 25–43 (EGEAPVEPSAAAAAPAASA) shows a compositional bias: low complexity. RRM domains lie at 75 to 158 (GKMF…KDPV) and 159 to 238 (KKIF…QPKE). Serine 87 is subject to Phosphoserine. Residues lysine 136 and lysine 208 each participate in a glycyl lysine isopeptide (Lys-Gly) (interchain with G-Cter in SUMO2) cross-link. Lysine 220 carries the N6-acetyllysine modification. Residues 239 to 285 (VYQQQQYGSGGRGNRNRGNRGSGGGQGSTNYGKSQRRGGHQNNYKPY) are disordered. Position 247 is a phosphoserine (serine 247). A Dimethylated arginine; alternate modification is found at arginine 250. The residue at position 250 (arginine 250) is an Omega-N-methylarginine; alternate. Omega-N-methylarginine occurs at positions 255 and 258. The residue at position 271 (lysine 271) is an N6-acetyllysine. Arginine 275 carries the post-translational modification Dimethylated arginine; alternate. Arginine 275 bears the Omega-N-methylarginine; alternate mark. Arginine 275 carries the asymmetric dimethylarginine; alternate modification.

In terms of assembly, identified in a IGF2BP1-dependent mRNP granule complex containing untranslated mRNAs. Interacts with APOBEC1. Ubiquitous.

The protein resides in the nucleus. It localises to the cytoplasm. In terms of biological role, transcriptional repressor. Binds to CArG box motifs, single-stranded and double-stranded DNA, and RNA. It may be that repression by CBF-A is a result of competitive binding of CBF, a putative positive factor, and CBF-A to the same or overlapping motifs around the CArG boxes. This chain is Heterogeneous nuclear ribonucleoprotein A/B (Hnrnpab), found in Mus musculus (Mouse).